A 137-amino-acid polypeptide reads, in one-letter code: Large ribosomal subunit protein uL16 (137 aa).

Basic residues predominate over residues 1–17; the sequence is MLQPKRTKFRKTHKGRN. The segment at 1–24 is disordered; sequence MLQPKRTKFRKTHKGRNRGLANSG.

It belongs to the universal ribosomal protein uL16 family. As to quaternary structure, part of the 50S ribosomal subunit.

In terms of biological role, binds 23S rRNA and is also seen to make contacts with the A and possibly P site tRNAs. In Aeromonas hydrophila subsp. hydrophila (strain ATCC 7966 / DSM 30187 / BCRC 13018 / CCUG 14551 / JCM 1027 / KCTC 2358 / NCIMB 9240 / NCTC 8049), this protein is Large ribosomal subunit protein uL16.